Reading from the N-terminus, the 453-residue chain is Bifunctional protein GlmU (453 aa).

A pyrophosphorylase region spans residues methionine 1 to arginine 226. Residues leucine 8–glycine 11, lysine 22, glutamine 73, glycine 78–threonine 79, tyrosine 100–aspartate 102, glycine 137, glutamate 151, asparagine 166, and asparagine 224 contribute to the UDP-N-acetyl-alpha-D-glucosamine site. Residue aspartate 102 participates in Mg(2+) binding. Residue asparagine 224 coordinates Mg(2+). Residues alanine 227–glutamine 247 are linker. The tract at residues glycine 248–lysine 453 is N-acetyltransferase. The UDP-N-acetyl-alpha-D-glucosamine site is built by arginine 330 and lysine 348. Histidine 360 serves as the catalytic Proton acceptor. 2 residues coordinate UDP-N-acetyl-alpha-D-glucosamine: tyrosine 363 and asparagine 374. Residues alanine 377, asparagine 383–tyrosine 384, serine 402, alanine 420, and arginine 437 contribute to the acetyl-CoA site.

It in the N-terminal section; belongs to the N-acetylglucosamine-1-phosphate uridyltransferase family. In the C-terminal section; belongs to the transferase hexapeptide repeat family. As to quaternary structure, homotrimer. Mg(2+) is required as a cofactor.

It localises to the cytoplasm. It catalyses the reaction alpha-D-glucosamine 1-phosphate + acetyl-CoA = N-acetyl-alpha-D-glucosamine 1-phosphate + CoA + H(+). The enzyme catalyses N-acetyl-alpha-D-glucosamine 1-phosphate + UTP + H(+) = UDP-N-acetyl-alpha-D-glucosamine + diphosphate. It functions in the pathway nucleotide-sugar biosynthesis; UDP-N-acetyl-alpha-D-glucosamine biosynthesis; N-acetyl-alpha-D-glucosamine 1-phosphate from alpha-D-glucosamine 6-phosphate (route II): step 2/2. It participates in nucleotide-sugar biosynthesis; UDP-N-acetyl-alpha-D-glucosamine biosynthesis; UDP-N-acetyl-alpha-D-glucosamine from N-acetyl-alpha-D-glucosamine 1-phosphate: step 1/1. Its pathway is bacterial outer membrane biogenesis; LPS lipid A biosynthesis. Functionally, catalyzes the last two sequential reactions in the de novo biosynthetic pathway for UDP-N-acetylglucosamine (UDP-GlcNAc). The C-terminal domain catalyzes the transfer of acetyl group from acetyl coenzyme A to glucosamine-1-phosphate (GlcN-1-P) to produce N-acetylglucosamine-1-phosphate (GlcNAc-1-P), which is converted into UDP-GlcNAc by the transfer of uridine 5-monophosphate (from uridine 5-triphosphate), a reaction catalyzed by the N-terminal domain. This chain is Bifunctional protein GlmU, found in Vibrio campbellii (strain ATCC BAA-1116).